The following is a 206-amino-acid chain: Small ribosomal subunit protein uS4 (206 aa).

One can recognise an S4 RNA-binding domain in the interval 96 to 156; the sequence is TRLDNVVYRM…EKSRTQARIK (61 aa).

Belongs to the universal ribosomal protein uS4 family. As to quaternary structure, part of the 30S ribosomal subunit. Contacts protein S5. The interaction surface between S4 and S5 is involved in control of translational fidelity.

In terms of biological role, one of the primary rRNA binding proteins, it binds directly to 16S rRNA where it nucleates assembly of the body of the 30S subunit. Its function is as follows. With S5 and S12 plays an important role in translational accuracy. The protein is Small ribosomal subunit protein uS4 of Shewanella putrefaciens (strain CN-32 / ATCC BAA-453).